The primary structure comprises 334 residues: Leucine-rich repeat-containing protein 26 (334 aa).

The first 26 residues, 1-26 (MRGPSWSRPRPLLLLLLLLSPWPVWA), serve as a signal peptide directing secretion. The Extracellular portion of the chain corresponds to 27–261 (QVSATASPSG…HCAQPLALRD (235 aa)). Residues 34 to 71 (PSGSLGAPDCPEVCTCVPGGLASCSALSLPAVPPGLSL) enclose the LRRNT domain. 2 disulfides stabilise this stretch: cysteine 43–cysteine 49 and cysteine 47–cysteine 57. LRR repeat units lie at residues 72–93 (RLRA…AFAG), 96–117 (ALQR…AFWG), 120–141 (ALQL…TFAP), 144–167 (ALRN…GALP), and 168–190 (LLRS…LGRL). N-linked (GlcNAc...) asparagine glycosylation is present at asparagine 147. Positions 201-255 (NPWGCGCALRPLCAWLRRHPLPASEAETVLCVWPGRLTLSPLTAFSDAAFSHCAQ) constitute an LRRCT domain. Disulfide bonds link cysteine 205-cysteine 231 and cysteine 207-cysteine 253. Residues 262–282 (LAVVYTLGPASFLVSLASCLA) form a helical membrane-spanning segment. At 283-334 (LGSGLTACRARRRRLRTAALRPPRPPDPNPDPDPHGCASPADPGSPAAAAQA) the chain is on the cytoplasmic side. The tract at residues 298–334 (RTAALRPPRPPDPNPDPDPHGCASPADPGSPAAAAQA) is disordered. A compositionally biased stretch (pro residues) spans 304–313 (PPRPPDPNPD). Residues 320 to 334 (ASPADPGSPAAAAQA) show a composition bias toward low complexity.

As to quaternary structure, interacts with KCNMA1. As to expression, isoform 1 is expressed highly in normal prostate and salivary gland, very weakly in colon, pancreas, and intestine, and not at all in other tissues. Isoform 1 is expressed highly in many cancer cell lines and in breast cancer, pancreatic cancer and colon cancer. Isoform 2 is expressed in cancer cell lines.

It is found in the cell membrane. The protein resides in the cytoplasm. Its subcellular location is the cytoskeleton. Its function is as follows. Auxiliary protein of the large-conductance, voltage and calcium-activated potassium channel (BK alpha). Required for the conversion of BK alpha channels from a high-voltage to a low-voltage activated channel type in non-excitable cells. These are characterized by negative membrane voltages and constant low levels of calcium. The polypeptide is Leucine-rich repeat-containing protein 26 (LRRC26) (Homo sapiens (Human)).